The primary structure comprises 509 residues: FAD-linked oxidoreductase anuG (509 aa).

An N-terminal signal peptide occupies residues 1 to 21 (MVQISNVWGFGLAIMASLAAA). The region spanning 75–246 (YAAPKFTVVV…TSFEMSIYPT (172 aa)) is the FAD-binding PCMH-type domain.

This sequence belongs to the oxygen-dependent FAD-linked oxidoreductase family. FAD is required as a cofactor.

The enzyme catalyses (2S,9S)-annullatin H + 2 A = (2S,9S)-annullatin D + 2 AH2. Its pathway is secondary metabolite biosynthesis. Cytochrome P450 monooxygenase; part of the gene cluster that mediates the biosynthesis of annullatin D, an alkylated aromatic polyketide with a fused dihydrobenzofuran lactone ring system that exhibits potent agonistic activities toward the cannabinoid receptors. Within the pathway, anuG is responsible for the five-member lactone ring formation in (2S, 9S)-annullatin D via oxidative lactonization between the two hydroxyl groups. The annullatin backbone 2-hydroxymethyl-3-pentylphenol is assembled from one acetyl-CoA starter unit and 5 malonyl-CoA elongation units by cooperation of the highly reducing polyketide synthase anuA, the short-chain dehydrogenase anuB and the oxidoreductase anuC, before being hydroxylated at the C-5 alkyl chain by the cytochrome P450 monooxygenase anuE to form (8S)-annullatin E. The prenyltransferase anuH subsequently installs one isoprenyl group at the benzene ring to form (8S)-annullatin J. Enzymatic or nonenzymatic dihydro-benzofuran ring formation between the prenyl and the phenolic hydroxyl groups in (8S)-annullatin J results in two diastereomers (2S,9S)-annullatin H and compound 12. The intermediate (2S,9S)-annullatin H is then converted to (2S,9S)-annullatin D by the FAD-linked oxidoreductase anuG-catalyzed five-member lactone ring formation. The isomer 12 acts as a substrate for the short-chain dehydrogenase anuF and is oxidized to (2R)-annullatin F, which is subsequently acetylated by an acetyltransferase leading to (2R)-annullatin G formation. The remaining enzymes identified within the cluster, anuD, anuI and anuJ, seem not to be involved in annullatin biosynthesis. This chain is FAD-linked oxidoreductase anuG, found in Penicillium roqueforti (strain FM164).